The following is a 216-amino-acid chain: MSLGLVGRKVGMTRIFTAEGDSIPVTVLDVSDNRVTQIKTVETDGYTAVQVAFGSRRASRVTKPLAGHLAKAGVEAGEILKEFRIDAAKAAELSNGAVVGADLFEVGQKVDVQGVSIGKGYAGTIKRYNFSSGRATHGNSRSHNVPGSIGMAQDPGRVFPGKRMTGHLGDVTVTVQNLEIARIDAERKLLLVKGAIPGAKGGKVFVTPAVKTKGAK.

Q153 is subject to N5-methylglutamine.

It belongs to the universal ribosomal protein uL3 family. In terms of assembly, part of the 50S ribosomal subunit. Forms a cluster with proteins L14 and L19. In terms of processing, methylated by PrmB.

In terms of biological role, one of the primary rRNA binding proteins, it binds directly near the 3'-end of the 23S rRNA, where it nucleates assembly of the 50S subunit. In Burkholderia ambifaria (strain MC40-6), this protein is Large ribosomal subunit protein uL3.